Reading from the N-terminus, the 214-residue chain is Pyridoxine/pyridoxamine 5'-phosphate oxidase (214 aa).

Residues 7-10 (REEY) and lysine 65 each bind substrate. FMN is bound by residues 60-65 (RTVLLK), 75-76 (FT), arginine 81, lysine 82, and glutamine 104. Positions 122, 126, and 130 each coordinate substrate. FMN-binding positions include 139–140 (QS) and tryptophan 184. Position 190–192 (190–192 (RLH)) interacts with substrate. FMN is bound at residue arginine 194.

Belongs to the pyridoxamine 5'-phosphate oxidase family. Homodimer. The cofactor is FMN.

It catalyses the reaction pyridoxamine 5'-phosphate + O2 + H2O = pyridoxal 5'-phosphate + H2O2 + NH4(+). The catalysed reaction is pyridoxine 5'-phosphate + O2 = pyridoxal 5'-phosphate + H2O2. The protein operates within cofactor metabolism; pyridoxal 5'-phosphate salvage; pyridoxal 5'-phosphate from pyridoxamine 5'-phosphate: step 1/1. It participates in cofactor metabolism; pyridoxal 5'-phosphate salvage; pyridoxal 5'-phosphate from pyridoxine 5'-phosphate: step 1/1. In terms of biological role, catalyzes the oxidation of either pyridoxine 5'-phosphate (PNP) or pyridoxamine 5'-phosphate (PMP) into pyridoxal 5'-phosphate (PLP). This chain is Pyridoxine/pyridoxamine 5'-phosphate oxidase, found in Crocosphaera subtropica (strain ATCC 51142 / BH68) (Cyanothece sp. (strain ATCC 51142)).